We begin with the raw amino-acid sequence, 219 residues long: Octanoyltransferase (219 aa).

In terms of domain architecture, BPL/LPL catalytic spans 32 to 207 (ENSQDEIWIV…TLSQELGLDK (176 aa)). Substrate-binding positions include 71–78 (RGGQVTYH), 138–140 (SLG), and 151–153 (GLA). C169 serves as the catalytic Acyl-thioester intermediate.

The protein belongs to the LipB family.

It localises to the cytoplasm. It catalyses the reaction octanoyl-[ACP] + L-lysyl-[protein] = N(6)-octanoyl-L-lysyl-[protein] + holo-[ACP] + H(+). It functions in the pathway protein modification; protein lipoylation via endogenous pathway; protein N(6)-(lipoyl)lysine from octanoyl-[acyl-carrier-protein]: step 1/2. In terms of biological role, catalyzes the transfer of endogenously produced octanoic acid from octanoyl-acyl-carrier-protein onto the lipoyl domains of lipoate-dependent enzymes. Lipoyl-ACP can also act as a substrate although octanoyl-ACP is likely to be the physiological substrate. The sequence is that of Octanoyltransferase from Shewanella halifaxensis (strain HAW-EB4).